The following is a 542-amino-acid chain: Protein MGF 505-11L (542 aa).

The protein belongs to the asfivirus MGF 505 family.

Its function is as follows. Plays a role in virus cell tropism, and may be required for efficient virus replication in macrophages. This chain is Protein MGF 505-11L, found in African swine fever virus (isolate Warthog/Namibia/Wart80/1980) (ASFV).